The sequence spans 103 residues: MSEERTERPERTERPERPQQRGSGPRKRRPFQRRKVCRFCADKTLVIDYKDPRVLRSFITERGKIVPRRISGNCSAHQREITEAIKRARNIALIPIASTHVIA.

Basic and acidic residues predominate over residues 1-19 (MSEERTERPERTERPERPQ). Positions 1-33 (MSEERTERPERTERPERPQQRGSGPRKRRPFQR) are disordered. The segment covering 24–33 (GPRKRRPFQR) has biased composition (basic residues).

The protein belongs to the bacterial ribosomal protein bS18 family. In terms of assembly, part of the 30S ribosomal subunit. Forms a tight heterodimer with protein bS6.

In terms of biological role, binds as a heterodimer with protein bS6 to the central domain of the 16S rRNA, where it helps stabilize the platform of the 30S subunit. In Geobacter sulfurreducens (strain ATCC 51573 / DSM 12127 / PCA), this protein is Small ribosomal subunit protein bS18.